The primary structure comprises 277 residues: Large ribosomal subunit protein uL2 (277 aa).

Residues 222-277 (GSVMNPNDHPHGGGEGKSPVGHPGPLTPWGKPALGLKTRKNKKYSDKFIIKRKNKK) form a disordered region.

The protein belongs to the universal ribosomal protein uL2 family. Part of the 50S ribosomal subunit. Forms a bridge to the 30S subunit in the 70S ribosome.

Its function is as follows. One of the primary rRNA binding proteins. Required for association of the 30S and 50S subunits to form the 70S ribosome, for tRNA binding and peptide bond formation. It has been suggested to have peptidyltransferase activity; this is somewhat controversial. Makes several contacts with the 16S rRNA in the 70S ribosome. The sequence is that of Large ribosomal subunit protein uL2 from Clostridium kluyveri (strain NBRC 12016).